A 640-amino-acid polypeptide reads, in one-letter code: Threonine--tRNA ligase (640 aa).

Residues 1–61 (MPVITLPDGS…SNDATLQIIT (61 aa)) form the TGS domain. A catalytic region spans residues 242 to 533 (DHRKIGKQLD…LIEHYAGVFP (292 aa)). Cys-333, His-384, and His-510 together coordinate Zn(2+).

Belongs to the class-II aminoacyl-tRNA synthetase family. Homodimer. The cofactor is Zn(2+).

It is found in the cytoplasm. It catalyses the reaction tRNA(Thr) + L-threonine + ATP = L-threonyl-tRNA(Thr) + AMP + diphosphate + H(+). Catalyzes the attachment of threonine to tRNA(Thr) in a two-step reaction: L-threonine is first activated by ATP to form Thr-AMP and then transferred to the acceptor end of tRNA(Thr). Also edits incorrectly charged L-seryl-tRNA(Thr). This Pseudomonas putida (strain ATCC 700007 / DSM 6899 / JCM 31910 / BCRC 17059 / LMG 24140 / F1) protein is Threonine--tRNA ligase.